The chain runs to 227 residues: Endonuclease V (227 aa).

Mg(2+)-binding residues include aspartate 46 and aspartate 114.

This sequence belongs to the endonuclease V family. Mg(2+) is required as a cofactor.

It localises to the cytoplasm. The enzyme catalyses Endonucleolytic cleavage at apurinic or apyrimidinic sites to products with a 5'-phosphate.. Its function is as follows. DNA repair enzyme involved in the repair of deaminated bases. Selectively cleaves double-stranded DNA at the second phosphodiester bond 3' to a deoxyinosine leaving behind the intact lesion on the nicked DNA. The chain is Endonuclease V from Alkalilimnicola ehrlichii (strain ATCC BAA-1101 / DSM 17681 / MLHE-1).